The chain runs to 514 residues: Maturase K (514 aa).

This sequence belongs to the intron maturase 2 family. MatK subfamily.

The protein resides in the plastid. The protein localises to the chloroplast. Functionally, usually encoded in the trnK tRNA gene intron. Probably assists in splicing its own and other chloroplast group II introns. The chain is Maturase K from Plantago argentea (Silver plantain).